The sequence spans 95 residues: Aspartyl/glutamyl-tRNA(Asn/Gln) amidotransferase subunit C (95 aa).

It belongs to the GatC family. In terms of assembly, heterotrimer of A, B and C subunits.

The enzyme catalyses L-glutamyl-tRNA(Gln) + L-glutamine + ATP + H2O = L-glutaminyl-tRNA(Gln) + L-glutamate + ADP + phosphate + H(+). It carries out the reaction L-aspartyl-tRNA(Asn) + L-glutamine + ATP + H2O = L-asparaginyl-tRNA(Asn) + L-glutamate + ADP + phosphate + 2 H(+). Allows the formation of correctly charged Asn-tRNA(Asn) or Gln-tRNA(Gln) through the transamidation of misacylated Asp-tRNA(Asn) or Glu-tRNA(Gln) in organisms which lack either or both of asparaginyl-tRNA or glutaminyl-tRNA synthetases. The reaction takes place in the presence of glutamine and ATP through an activated phospho-Asp-tRNA(Asn) or phospho-Glu-tRNA(Gln). In Ruegeria sp. (strain TM1040) (Silicibacter sp.), this protein is Aspartyl/glutamyl-tRNA(Asn/Gln) amidotransferase subunit C.